Reading from the N-terminus, the 708-residue chain is Putative adhesion G protein-coupled receptor F2P (708 aa).

Residues methionine 1 to tyrosine 451 lie on the Extracellular side of the membrane. N-linked (GlcNAc...) asparagine glycans are attached at residues asparagine 21, asparagine 220, asparagine 252, asparagine 260, asparagine 305, asparagine 313, and asparagine 358. A GAIN-B domain is found at methionine 293 to glutamate 442. Cystine bridges form between cysteine 394/cysteine 421 and cysteine 409/cysteine 423. The GPS stretch occupies residues cysteine 394–glutamate 442. A helical membrane pass occupies residues valine 452–tryptophan 472. The Cytoplasmic segment spans residues serine 473–cysteine 487. Residues isoleucine 488–leucine 508 form a helical membrane-spanning segment. At serine 509 to leucine 530 the chain is on the extracellular side. The chain crosses the membrane as a helical span at residues serine 531–phenylalanine 551. Residues histidine 552 to serine 557 lie on the Cytoplasmic side of the membrane. A helical transmembrane segment spans residues valine 558–threonine 578. Residues valine 579–alanine 606 lie on the Extracellular side of the membrane. Residues phenylalanine 607–valine 627 form a helical membrane-spanning segment. Residues lysine 628–lysine 650 lie on the Cytoplasmic side of the membrane. A helical membrane pass occupies residues asparagine 651 to isoleucine 671. At aspartate 672–arginine 674 the chain is on the extracellular side. Residues serine 675–serine 695 form a helical membrane-spanning segment. The Cytoplasmic segment spans residues aspartate 696–leucine 708.

It belongs to the G-protein coupled receptor 2 family. Adhesion G-protein coupled receptor (ADGR) subfamily. High expression in kidney. Up-regulated in lung adenocarcinomas and prostate cancers.

It localises to the membrane. Functionally, orphan receptor. This Homo sapiens (Human) protein is Putative adhesion G protein-coupled receptor F2P.